The primary structure comprises 172 residues: Large ribosomal subunit protein uL10 (172 aa).

Belongs to the universal ribosomal protein uL10 family. Part of the ribosomal stalk of the 50S ribosomal subunit. The N-terminus interacts with L11 and the large rRNA to form the base of the stalk. The C-terminus forms an elongated spine to which L12 dimers bind in a sequential fashion forming a multimeric L10(L12)X complex.

Forms part of the ribosomal stalk, playing a central role in the interaction of the ribosome with GTP-bound translation factors. This is Large ribosomal subunit protein uL10 from Syntrophotalea carbinolica (strain DSM 2380 / NBRC 103641 / GraBd1) (Pelobacter carbinolicus).